The sequence spans 630 residues: Sodium-dependent serotonin transporter (630 aa).

The Cytoplasmic segment spans residues 1–87; that stretch reads METTPLNSQK…ERETWGKKVD (87 aa). The tract at residues 31–59 is disordered; that stretch reads VPTPGDKVESGQISNGYSAVPSPGAGDDT. Y47 is modified (phosphotyrosine). Residues 88–112 form a helical membrane-spanning segment; sequence FLLSVIGYAVDLGNVWRFPYICYQN. Residues G94, A96, V97, D98, and N101 each contribute to the Na(+) site. D98 is a serotonin binding site. Residues 113-115 are Extracellular-facing; the sequence is GGG. The chain crosses the membrane as a helical span at residues 116-135; the sequence is AFLIPYTIMAIFGGIPLFYM. Topologically, residues 136 to 160 are cytoplasmic; the sequence is ELALGQYHRNGCISIWRKICPIFKG. A Phosphotyrosine modification is found at Y142. A helical membrane pass occupies residues 161–186; sequence IGYAICIIAFYIASYYNTIMAWALYY. The Extracellular segment spans residues 187 to 252; sequence LISSFTDQLP…KGLQDLGGIS (66 aa). A disulfide bridge links C200 with C209. N-linked (GlcNAc...) asparagine glycans are attached at residues N208 and N217. Residues 253–271 form a helical membrane-spanning segment; that stretch reads WQLALCIMLIFTVIYFSIW. Residues 272-277 lie on the Cytoplasmic side of the membrane; it reads KGVKTS. T276 bears the Phosphothreonine mark. Residues 278–297 traverse the membrane as a helical segment; sequence GKVVWVTATFPYIILSVLLV. Topologically, residues 298 to 324 are extracellular; that stretch reads RGATLPGAWRGVLFYLKPNWQKLLETG. A helical transmembrane segment spans residues 325-347; sequence VWIDAAAQIFFSLGPGFGVLLAF. S336 is a binding site for Na(+). Over 348–360 the chain is Cytoplasmic; that stretch reads ASYNKFNNNCYQD. The chain crosses the membrane as a helical span at residues 361–380; that stretch reads ALVTSVVNCMTSFVSGFVIF. N368 lines the Na(+) pocket. Topologically, residues 381 to 421 are extracellular; the sequence is TVLGYMAEMRNEDVSEVAKDAGPSLLFITYAEAIANMPAST. The helical transmembrane segment at 422–443 threads the bilayer; it reads FFAIIFFLMLITLGLDSTFAGL. Na(+) contacts are provided by L434, D437, and S438. T439 is a binding site for serotonin. The Cytoplasmic segment spans residues 444 to 463; it reads EGVITAVLDEFPHIWAKRRE. Residues 464–483 form a helical membrane-spanning segment; it reads WFVLAVVITCFFGSLVTLTF. The Extracellular portion of the chain corresponds to 484-494; the sequence is GGAYVVKLLEE. Serotonin is bound by residues E494 and Y495. The helical transmembrane segment at 495 to 516 threads the bilayer; sequence YATGPAVLTVALIEAVAVSWFY. Residues 517–538 are Cytoplasmic-facing; that stretch reads GITQFCRDVKEMLGFSPGWFWR. The helical transmembrane segment at 539-558 threads the bilayer; it reads ICWVAISPLFLLFIICSFLM. Serotonin-binding residues include F556 and S559. Residues 559 to 574 are Extracellular-facing; that stretch reads SPPQLRLFQYNYPHWS. Residues 575 to 595 form a helical membrane-spanning segment; sequence IILGYCIGTSSFVCIPTYIAY. The Cytoplasmic segment spans residues 596-630; the sequence is RLISTPGTFKERIIKSITPETPTEIPCGDVRLNAV. Residues 616–624 are interaction with RAB4A; sequence TPTEIPCGD.

This sequence belongs to the sodium:neurotransmitter symporter (SNF) (TC 2.A.22) family. SLC6A4 subfamily. In terms of assembly, monomer or homooligomer. Interacts (via C-terminus) with SCAMP2; the interaction is direct and retains transporter molecules intracellularly. Interacts with filamentous actin and STX1A. Interacts (via the N-terminus) with STX1A (via the H3 domain); this interaction regulates SLC4A6 channel conductance. Interacts with SEC23A, SEC24C and PATJ. Interacts with NOS1; the interaction may diminish the cell surface localization of SERT in the brain and, correspondingly, reduce serotonin reuptake. Interacts with TGFB1I1. Interacts with ITGAV:ITGB3. Interacts (via C-terminus) with ITGB3; this interaction regulates SLC6A4 trafficking. Post-translationally, phosphorylation at Thr-276 increases 5-HT uptake and is required for cGMP-mediated SERT regulation.

Its subcellular location is the cell membrane. It is found in the endomembrane system. The protein resides in the endosome membrane. The protein localises to the synapse. It localises to the cell junction. Its subcellular location is the focal adhesion. It is found in the cell projection. The protein resides in the neuron projection. It carries out the reaction serotonin(out) + K(+)(in) + Na(+)(out) + H(+)(in) = serotonin(in) + K(+)(out) + Na(+)(in) + H(+)(out). Its function is as follows. Serotonin transporter that cotransports serotonin with one Na(+) ion in exchange for one K(+) ion and possibly one proton in an overall electroneutral transport cycle. Transports serotonin across the plasma membrane from the extracellular compartment to the cytosol thus limiting serotonin intercellular signaling. Essential for serotonin homeostasis in the central nervous system. In the developing somatosensory cortex, acts in glutamatergic neurons to control serotonin uptake and its trophic functions accounting for proper spatial organization of cortical neurons and elaboration of sensory circuits. In the mature cortex, acts primarily in brainstem raphe neurons to mediate serotonin uptake from the synaptic cleft back into the pre-synaptic terminal thus terminating serotonin signaling at the synapse. Modulates mucosal serotonin levels in the gastrointestinal tract through uptake and clearance of serotonin in enterocytes. Required for enteric neurogenesis and gastrointestinal reflexes. Regulates blood serotonin levels by ensuring rapid high affinity uptake of serotonin from plasma to platelets, where it is further stored in dense granules via vesicular monoamine transporters and then released upon stimulation. Mechanistically, the transport cycle starts with an outward-open conformation having Na1(+) and Cl(-) sites occupied. The binding of a second extracellular Na2(+) ion and serotonin substrate leads to structural changes to outward-occluded to inward-occluded to inward-open, where the Na2(+) ion and serotonin are released into the cytosol. Binding of intracellular K(+) ion induces conformational transitions to inward-occluded to outward-open and completes the cycle by releasing K(+) possibly together with a proton bound to Asp-98 into the extracellular compartment. Na1(+) and Cl(-) ions remain bound throughout the transport cycle. Additionally, displays serotonin-induced channel-like conductance for monovalent cations, mainly Na(+) ions. The channel activity is uncoupled from the transport cycle and may contribute to the membrane resting potential or excitability. This Macaca mulatta (Rhesus macaque) protein is Sodium-dependent serotonin transporter (SLC6A4).